A 427-amino-acid polypeptide reads, in one-letter code: Glutamate-1-semialdehyde 2,1-aminomutase (427 aa).

K267 carries the post-translational modification N6-(pyridoxal phosphate)lysine.

This sequence belongs to the class-III pyridoxal-phosphate-dependent aminotransferase family. HemL subfamily. As to quaternary structure, homodimer. The cofactor is pyridoxal 5'-phosphate.

The protein localises to the cytoplasm. It carries out the reaction (S)-4-amino-5-oxopentanoate = 5-aminolevulinate. It functions in the pathway porphyrin-containing compound metabolism; protoporphyrin-IX biosynthesis; 5-aminolevulinate from L-glutamyl-tRNA(Glu): step 2/2. The chain is Glutamate-1-semialdehyde 2,1-aminomutase from Desulfosudis oleivorans (strain DSM 6200 / JCM 39069 / Hxd3) (Desulfococcus oleovorans).